The sequence spans 454 residues: Bifunctional protein GlmU (454 aa).

The pyrophosphorylase stretch occupies residues 1–227 (MKKLSVVILA…KMEVEGANNR (227 aa)). Residues 9 to 12 (LAAG), K23, Q74, 79 to 80 (GT), 101 to 103 (YGD), G138, E152, N167, and N225 contribute to the UDP-N-acetyl-alpha-D-glucosamine site. D103 is a Mg(2+) binding site. A Mg(2+)-binding site is contributed by N225. Residues 228-248 (LQLAALERYYQHKQAERLLLE) form a linker region. The segment at 249–454 (GVMLIDPARF…AGWQRPTKKK (206 aa)) is N-acetyltransferase. Positions 331 and 349 each coordinate UDP-N-acetyl-alpha-D-glucosamine. The Proton acceptor role is filled by H361. Residues Y364 and N375 each contribute to the UDP-N-acetyl-alpha-D-glucosamine site. Residues A378, 384 to 385 (NY), S403, A421, and R438 contribute to the acetyl-CoA site.

This sequence in the N-terminal section; belongs to the N-acetylglucosamine-1-phosphate uridyltransferase family. It in the C-terminal section; belongs to the transferase hexapeptide repeat family. Homotrimer. It depends on Mg(2+) as a cofactor.

It localises to the cytoplasm. It carries out the reaction alpha-D-glucosamine 1-phosphate + acetyl-CoA = N-acetyl-alpha-D-glucosamine 1-phosphate + CoA + H(+). The catalysed reaction is N-acetyl-alpha-D-glucosamine 1-phosphate + UTP + H(+) = UDP-N-acetyl-alpha-D-glucosamine + diphosphate. It functions in the pathway nucleotide-sugar biosynthesis; UDP-N-acetyl-alpha-D-glucosamine biosynthesis; N-acetyl-alpha-D-glucosamine 1-phosphate from alpha-D-glucosamine 6-phosphate (route II): step 2/2. It participates in nucleotide-sugar biosynthesis; UDP-N-acetyl-alpha-D-glucosamine biosynthesis; UDP-N-acetyl-alpha-D-glucosamine from N-acetyl-alpha-D-glucosamine 1-phosphate: step 1/1. Its pathway is bacterial outer membrane biogenesis; LPS lipid A biosynthesis. Catalyzes the last two sequential reactions in the de novo biosynthetic pathway for UDP-N-acetylglucosamine (UDP-GlcNAc). The C-terminal domain catalyzes the transfer of acetyl group from acetyl coenzyme A to glucosamine-1-phosphate (GlcN-1-P) to produce N-acetylglucosamine-1-phosphate (GlcNAc-1-P), which is converted into UDP-GlcNAc by the transfer of uridine 5-monophosphate (from uridine 5-triphosphate), a reaction catalyzed by the N-terminal domain. This is Bifunctional protein GlmU from Mannheimia succiniciproducens (strain KCTC 0769BP / MBEL55E).